The sequence spans 231 residues: Dephospho-CoA kinase domain-containing protein (231 aa).

In terms of domain architecture, DPCK spans 3–207; sequence LVGLTGGIAS…HSLEYLPLRL (205 aa). ATP is bound at residue 8-15; it reads GGIASGKS.

This sequence belongs to the CoaE family.

The polypeptide is Dephospho-CoA kinase domain-containing protein (DCAKD) (Bos taurus (Bovine)).